The primary structure comprises 67 residues: Large ribosomal subunit protein uL29 (67 aa).

The protein belongs to the universal ribosomal protein uL29 family.

The sequence is that of Large ribosomal subunit protein uL29 from Alkaliphilus oremlandii (strain OhILAs) (Clostridium oremlandii (strain OhILAs)).